A 363-amino-acid chain; its full sequence is uncharacterized protein (363 aa).

This sequence belongs to the TelA family.

This is an uncharacterized protein from Bacillus subtilis (strain 168).